The following is a 191-amino-acid chain: ECF RNA polymerase sigma-E factor (191 aa).

Positions 1-153 are binds RNAP core; the sequence is MSEQLTDQVL…MAITLRELDG (153 aa). Positions 25–92 are sigma-70 factor domain-2; it reads LVVRYQHKVA…KNYLVAQGRR (68 aa). The Polymerase core binding signature appears at 48 to 61; it reads DVVQESFIKAYRAL. The sigma-70 factor domain-4 stretch occupies residues 129–180; that stretch reads QIVFRTIESLPEDLRMAITLRELDGLSYEEIAAIMDCPVGTVRSRIFRAREA. The segment at residues 156–175 is a DNA-binding region (H-T-H motif); sequence YEEIAAIMDCPVGTVRSRIF.

It belongs to the sigma-70 factor family. ECF subfamily. In terms of assembly, interacts transiently with the RNAP catalytic core formed by RpoA, RpoB, RpoC and RpoZ (2 alpha, 1 beta, 1 beta' and 1 omega subunit) to form the RNAP holoenzyme that can initiate transcription. Interacts 1:1 with anti-sigma-E factor RseA which prevents binding to RNAP catalytic core.

The protein resides in the cytoplasm. Its activity is regulated as follows. ECF sigma-E is held in an inactive form by its cognate anti-sigma factor (RseA) until released by regulated intramembrane proteolysis (RIP). RIP occurs when an extracytoplasmic signal (periplasmic, acid or heat stress) triggers a concerted proteolytic cascade to transmit information and elicit cellular responses. In S.typhimurium there are 2 cascades, the heat shock response which depends on DegS and RseP, and acid response which depends only on RseP. The anti-sigma factor RseA is an inner membrane protein, binding sigma-E in the cytoplasm and RseB in the periplasm. RseA is first cut extracytoplasmically (site-1 protease, S1P, by DegS), then within the membrane itself (site-2 protease, S2P, by RseP), while cytoplasmic proteases (predominantly ClpX-ClpP) finish degrading the regulatory protein, liberating sigma-E. Degradation of RseA requires 2 signals to activate DegS; an outer membrane protein (OMP) signal activates DegS, while an LPS signal causes release of RseB from RseA, freeing RseA to be cleaved. OMP stress can be abrogated by overexpression of the sRNA rybB. Its function is as follows. Sigma factors are initiation factors that promote the attachment of RNA polymerase (RNAP) to specific initiation sites and are then released. Extracytoplasmic function (ECF) sigma-E controls the envelope stress response, responding to periplasmic protein stress, increased levels of periplasmic lipopolysaccharide (LPS) as well as acid stress, heat shock and oxidative stress; it controls protein processing in the extracytoplasmic compartment. This Salmonella typhimurium (strain 14028s / SGSC 2262) protein is ECF RNA polymerase sigma-E factor (rpoE).